The sequence spans 562 residues: Arginine--tRNA ligase (562 aa).

The 'HIGH' region signature appears at 121-131; sequence PNIAKPFSVGH.

Belongs to the class-I aminoacyl-tRNA synthetase family. Monomer.

Its subcellular location is the cytoplasm. The enzyme catalyses tRNA(Arg) + L-arginine + ATP = L-arginyl-tRNA(Arg) + AMP + diphosphate. This chain is Arginine--tRNA ligase, found in Streptococcus suis (strain 98HAH33).